A 97-amino-acid polypeptide reads, in one-letter code: C-C motif chemokine 7 (97 aa).

The N-terminal stretch at 1 to 23 (MRISATLLCLLLIAAAFSIQVWA) is a signal peptide. Gln24 is modified (pyrrolidone carboxylic acid). Asn29 carries an N-linked (GlcNAc...) asparagine glycan. 2 cysteine pairs are disulfide-bonded: Cys33/Cys57 and Cys34/Cys73.

It belongs to the intercrine beta (chemokine CC) family. In terms of assembly, monomer. Interacts with TNFAIP6 (via Link domain).

The protein localises to the secreted. Its function is as follows. Chemotactic factor that attracts monocytes and eosinophils, but not neutrophils. Augments monocyte anti-tumor activity. This Mus musculus (Mouse) protein is C-C motif chemokine 7 (Ccl7).